Consider the following 229-residue polypeptide: Lipoprotein-releasing system ATP-binding protein LolD (229 aa).

An ABC transporter domain is found at 9-228; that stretch reads HGLRKIYREA…QDGNLVQVEV (220 aa). 42–49 contributes to the ATP binding site; the sequence is GSSGSGKS.

It belongs to the ABC transporter superfamily. Lipoprotein translocase (TC 3.A.1.125) family. As to quaternary structure, the complex is composed of two ATP-binding proteins (LolD) and two transmembrane proteins (LolC and LolE).

Its subcellular location is the cell inner membrane. Part of the ABC transporter complex LolCDE involved in the translocation of mature outer membrane-directed lipoproteins, from the inner membrane to the periplasmic chaperone, LolA. Responsible for the formation of the LolA-lipoprotein complex in an ATP-dependent manner. The chain is Lipoprotein-releasing system ATP-binding protein LolD from Photobacterium profundum (strain SS9).